The primary structure comprises 110 residues: Iron-sulfur cluster insertion protein ErpA (110 aa).

Residues Cys-38, Cys-102, and Cys-104 each contribute to the iron-sulfur cluster site.

This sequence belongs to the HesB/IscA family. In terms of assembly, homodimer. Iron-sulfur cluster is required as a cofactor.

Its function is as follows. Required for insertion of 4Fe-4S clusters for at least IspG. This Marinobacter nauticus (strain ATCC 700491 / DSM 11845 / VT8) (Marinobacter aquaeolei) protein is Iron-sulfur cluster insertion protein ErpA.